The following is a 207-amino-acid chain: Antitermination protein Q (207 aa).

A disordered region spans residues 1 to 28 (MRLESVAKFHSPKSPMMSDSPRATASDS). Residues Cys-118, Cys-121, Cys-144, and Cys-147 each coordinate Zn(2+). Residues 118-147 (CRNCHGTGRAVDIAKTEQWGRVVEKECGRC) fold into a zinc finger. Residues 171 to 192 (LTQPTWSRTVKPLYDALVVQCH) mediate DNA binding.

Belongs to the phage antitermination Q type 2 family. Interacts with host RPOB (via flap domain); this interaction renders host RNAP resistant to transcription pausing and allows it to read through termination signals. Interacts with host RNA polymerase sigma factor RPOD (via domain-4). Interacts with host NusA (via N-terminus and AR2 domain); this interaction releases the autoinhibition of NusA.

Its function is as follows. Mediates the switch from middle to viral late gene expression by associating with host RNA polymerase (RNAP) so that the latter can read without pausing and through transcription terminators preceding late genes. Competes with host factor sigma 70 for binding to RPOB, the beta-subunit of host RNAP. To join the elongation complex, binds a specific DNA Q-binding element (QBE) and interacts with RNAP that is paused during early elongation. Participates in the lysis-lysogeny decision by activating the expression of the late lytic genes. The sequence is that of Antitermination protein Q (23) from Salmonella typhimurium.